The primary structure comprises 156 residues: Small ribosomal subunit protein uS7 (156 aa).

It belongs to the universal ribosomal protein uS7 family. Part of the 30S ribosomal subunit. Contacts proteins S9 and S11.

One of the primary rRNA binding proteins, it binds directly to 16S rRNA where it nucleates assembly of the head domain of the 30S subunit. Is located at the subunit interface close to the decoding center, probably blocks exit of the E-site tRNA. The polypeptide is Small ribosomal subunit protein uS7 (Brachyspira hyodysenteriae (strain ATCC 49526 / WA1)).